Reading from the N-terminus, the 88-residue chain is Large ribosomal subunit protein bL27 (88 aa).

A disordered region spans residues 1-21 (MAHKKGQGSTQNNRDSAGRRL).

It belongs to the bacterial ribosomal protein bL27 family.

The polypeptide is Large ribosomal subunit protein bL27 (Helicobacter pylori (strain J99 / ATCC 700824) (Campylobacter pylori J99)).